A 271-amino-acid chain; its full sequence is RxLR effector protein PITG_15679 (271 aa).

An N-terminal signal peptide occupies residues 1 to 18 (MKVLQLIALTALVSSCVA). The short motif at 49-69 (RSLRRYDLEGLDSVNSNREER) is the RxLR-dEER element. Residues 212–271 (RLLSANVVMRLNDKGEKQILLISSSNPKKGDFLLPKGGWDKGEDVKKAALREVIEEGGVR) enclose the Nudix hydrolase domain. The Nudix box motif lies at 248-269 (GGWDKGEDVKKAALREVIEEGG).

In the N-terminal section; belongs to the RxLR effector family. This sequence in the C-terminal section; belongs to the Nudix hydrolase family.

The protein resides in the secreted. It localises to the host cytoplasm. Its subcellular location is the host nucleus. Effector that enhances P.infestans colonization of Nicotiana benthamiana leaves. This chain is RxLR effector protein PITG_15679, found in Phytophthora infestans (strain T30-4) (Potato late blight agent).